The chain runs to 67 residues: DNA-directed RNA polymerase subunit omega (67 aa).

It belongs to the RNA polymerase subunit omega family. As to quaternary structure, the RNAP catalytic core consists of 2 alpha, 1 beta, 1 beta' and 1 omega subunit. When a sigma factor is associated with the core the holoenzyme is formed, which can initiate transcription.

It carries out the reaction RNA(n) + a ribonucleoside 5'-triphosphate = RNA(n+1) + diphosphate. Its function is as follows. Promotes RNA polymerase assembly. Latches the N- and C-terminal regions of the beta' subunit thereby facilitating its interaction with the beta and alpha subunits. The chain is DNA-directed RNA polymerase subunit omega from Exiguobacterium sibiricum (strain DSM 17290 / CCUG 55495 / CIP 109462 / JCM 13490 / 255-15).